A 96-amino-acid polypeptide reads, in one-letter code: MPLDAATKKQIMSEFAQKEGDTGSPEVQVAMLSRRISDLTEHLKTHKHDHHSRRGLLILVGQRRRLLQYLAKKDIQRFRALVDRLGIRRGAAGGAK.

It belongs to the universal ribosomal protein uS15 family. As to quaternary structure, part of the 30S ribosomal subunit. Forms a bridge to the 50S subunit in the 70S ribosome, contacting the 23S rRNA.

Functionally, one of the primary rRNA binding proteins, it binds directly to 16S rRNA where it helps nucleate assembly of the platform of the 30S subunit by binding and bridging several RNA helices of the 16S rRNA. Forms an intersubunit bridge (bridge B4) with the 23S rRNA of the 50S subunit in the ribosome. This is Small ribosomal subunit protein uS15 from Streptomyces griseus subsp. griseus (strain JCM 4626 / CBS 651.72 / NBRC 13350 / KCC S-0626 / ISP 5235).